The following is a 151-amino-acid chain: Small ribosomal subunit protein uS11 (151 aa).

The interval 130–151 is disordered; that stretch reads EDVTPIPSDSTRRKGGRRGRRL. Residues 142-151 are compositionally biased toward basic residues; sequence RKGGRRGRRL.

This sequence belongs to the universal ribosomal protein uS11 family.

The protein is Small ribosomal subunit protein uS11 of Aedes aegypti (Yellowfever mosquito).